Reading from the N-terminus, the 2180-residue chain is Genome polyprotein (2180 aa).

Disordered stretches follow at residues 507 to 529, 624 to 679, 703 to 809, and 822 to 848; these read DGAD…AKDP, QPQK…YPIQ, KRAK…NTLP, and SEVE…PPKM. Residues 573–624 adopt a coiled-coil conformation; it reads SKNQGLIRVLEQQLQDLNKRICPPGTSLFHFFDQQKSEMASLKEQIRLLKEQ. Polar residues-rich tracts occupy residues 631–643 and 670–679; these read DTPS…QPFH and PSLFSQYPIQ. Over residues 703-716 the composition is skewed to basic and acidic residues; sequence KRAKKKLQKDEVKQ. Residues 759–771 show a composition bias toward polar residues; that stretch reads SEDTSSQSYISTE. Low complexity predominate over residues 784–807; it reads SEESTQLSQLSSSSNDSPENNENT. Acidic residues predominate over residues 822–832; the sequence is SEVEDEVDGMT. The segment at 1113 to 1126 adopts a CCHC-type zinc-finger fold; that stretch reads CFTCGKIGHFSRNC. Asp1227 serves as the catalytic For protease activity; shared with dimeric partner. Mg(2+) contacts are provided by Asp1480, Asp1543, and Asp1544. Disordered stretches follow at residues 1824–1848, 2115–2145, and 2161–2180; these read RRTR…YKLS, NIVK…KNKC, and YSTK…EPCI. Residues 1828–1847 show a composition bias toward polar residues; the sequence is SNSTKSKADSSQSTGSSYKL. Positions 2120–2145 are enriched in basic residues; sequence SPRKRKGKAKSKSSTRNEKRRAKNKC. A compositionally biased stretch (polar residues) spans 2163 to 2180; that stretch reads TKPSTPSWTQDSSSEPCI.

Belongs to the Petuviruses genome polyprotein family.

It carries out the reaction DNA(n) + a 2'-deoxyribonucleoside 5'-triphosphate = DNA(n+1) + diphosphate. Encodes presumably for at least four polypeptides: Movement protein (MP), capsid protein (CP), Protease (PR), and reverse transcriptase (RT). The polypeptide is Genome polyprotein (Petunia (PVCV)).